Consider the following 564-residue polypeptide: Dihydroxy-acid dehydratase (564 aa).

Residue Asp80 participates in Mg(2+) binding. Cys121 provides a ligand contact to [2Fe-2S] cluster. Positions 122 and 123 each coordinate Mg(2+). Lys123 carries the N6-carboxylysine modification. Cys194 provides a ligand contact to [2Fe-2S] cluster. Residue Glu447 participates in Mg(2+) binding. Catalysis depends on Ser473, which acts as the Proton acceptor.

The protein belongs to the IlvD/Edd family. As to quaternary structure, homodimer. [2Fe-2S] cluster is required as a cofactor. Requires Mg(2+) as cofactor.

The enzyme catalyses (2R)-2,3-dihydroxy-3-methylbutanoate = 3-methyl-2-oxobutanoate + H2O. It catalyses the reaction (2R,3R)-2,3-dihydroxy-3-methylpentanoate = (S)-3-methyl-2-oxopentanoate + H2O. It participates in amino-acid biosynthesis; L-isoleucine biosynthesis; L-isoleucine from 2-oxobutanoate: step 3/4. It functions in the pathway amino-acid biosynthesis; L-valine biosynthesis; L-valine from pyruvate: step 3/4. Its function is as follows. Functions in the biosynthesis of branched-chain amino acids. Catalyzes the dehydration of (2R,3R)-2,3-dihydroxy-3-methylpentanoate (2,3-dihydroxy-3-methylvalerate) into 2-oxo-3-methylpentanoate (2-oxo-3-methylvalerate) and of (2R)-2,3-dihydroxy-3-methylbutanoate (2,3-dihydroxyisovalerate) into 2-oxo-3-methylbutanoate (2-oxoisovalerate), the penultimate precursor to L-isoleucine and L-valine, respectively. The polypeptide is Dihydroxy-acid dehydratase (Listeria innocua serovar 6a (strain ATCC BAA-680 / CLIP 11262)).